The following is a 328-amino-acid chain: MFMKAPVRVAVTGAAGQISYSLLFRIASGDMLGKDQPVILQLLEITPALEALNGVIMELEDCAFPLVAGITGTDDANVAFKDADYALLVGARPRGPGMERKDLLEANAAIFSAQGKAINDNASKGIKVLVVGNPANTNALIAQRNAPDIDPRQFTAMTRLDHNRAMAQLANKLGKTVNDVKKMLIWGNHSSTQYPDLHHCEVDGKVAIDQVEQDWYENDYIPTVQQRGAAIIKARGASSAASAANAAVDHMRSWALGTDEGDWVSMGIYSDGSYGIQEGLIYSFPCTCKNGDWTIVQGLEVNDFSRGKMQATEQELAEERDAVSHLLP.

13-19 (GAAGQIS) contacts NAD(+). Positions 94 and 100 each coordinate substrate. NAD(+)-binding positions include asparagine 107, glutamine 114, and 131–133 (VGN). 2 residues coordinate substrate: asparagine 133 and arginine 164. The Proton acceptor role is filled by histidine 189.

It belongs to the LDH/MDH superfamily. MDH type 2 family.

The catalysed reaction is (S)-malate + NAD(+) = oxaloacetate + NADH + H(+). Its function is as follows. Catalyzes the reversible oxidation of malate to oxaloacetate. The sequence is that of Malate dehydrogenase from Alcanivorax borkumensis (strain ATCC 700651 / DSM 11573 / NCIMB 13689 / SK2).